Consider the following 269-residue polypeptide: Hydroxyacylglutathione hydrolase (269 aa).

7 residues coordinate Zn(2+): His-56, His-58, Asp-60, His-61, His-115, Asp-137, and His-177.

It belongs to the metallo-beta-lactamase superfamily. Glyoxalase II family. As to quaternary structure, monomer. The cofactor is Zn(2+).

It catalyses the reaction an S-(2-hydroxyacyl)glutathione + H2O = a 2-hydroxy carboxylate + glutathione + H(+). It functions in the pathway secondary metabolite metabolism; methylglyoxal degradation; (R)-lactate from methylglyoxal: step 2/2. Thiolesterase that catalyzes the hydrolysis of S-D-lactoyl-glutathione to form glutathione and D-lactic acid. The polypeptide is Hydroxyacylglutathione hydrolase (Leptospira borgpetersenii serovar Hardjo-bovis (strain JB197)).